Here is a 668-residue protein sequence, read N- to C-terminus: Kinesin-like protein KIF2B (668 aa).

The residue at position 125 (threonine 125) is a Phosphothreonine; by PLK1. Positions 149 to 177 (CLREIEKLQKQREKRRRLQLEIRARRALD) form a coiled coil. Serine 204 is modified (phosphoserine; by PLK1). The region spanning 213–543 (RICVCVRKRP…LRYANRVKEL (331 aa)) is the Kinesin motor domain. 303 to 310 (GQTGSGKT) provides a ligand contact to ATP. The span at 585–604 (PTVEKEEEKESDELTSKKEP) shows a compositional bias: basic and acidic residues. The disordered stretch occupies residues 585–605 (PTVEKEEEKESDELTSKKEPA). A coiled-coil region spans residues 646 to 667 (VLTDIQKKLQSLREDLQKKSQV).

Belongs to the TRAFAC class myosin-kinesin ATPase superfamily. Kinesin family. MCAK/KIF2 subfamily. In terms of processing, phosphorylation at Thr-125 by PLK1 is required for activity in the correction of kinetochore-microtubules attachment errors, while phosphorylation at Ser-204 also by PLK1 is required for the kinetochore localization and activity in prometaphase.

It localises to the cytoplasm. Its subcellular location is the cytoskeleton. The protein localises to the microtubule organizing center. The protein resides in the centrosome. It is found in the spindle. It localises to the chromosome. Its subcellular location is the centromere. The protein localises to the kinetochore. Its function is as follows. Plus end-directed microtubule-dependent motor required for spindle assembly and chromosome movement during mitosis. Has microtubule depolymerization activity. Plays a role in chromosome congression. The chain is Kinesin-like protein KIF2B (Kif2b) from Mus musculus (Mouse).